A 247-amino-acid chain; its full sequence is 4-nitrobenzoate reductase (247 aa).

Arg-29–Arg-33 is an FMN binding site. 4 residues coordinate NADP(+): Ser-59, Arg-112, Tyr-120, and Leu-126. FMN is bound at residue Arg-232.

This sequence belongs to the nitroreductase family. It depends on FMN as a cofactor.

The catalysed reaction is 4-nitrobenzoate + 2 NADPH + 2 H(+) = 4-hydroxylaminobenzoate + 2 NADP(+) + H2O. Its function is as follows. Nitroreductase involved in the degradation of nitroaromatic compounds. Catalyzes the conversion of 4-nitrobenzoate to 4-hydroxylaminobenzoate. In Nocardioides sp. (strain LMS-CY), this protein is 4-nitrobenzoate reductase.